Here is a 486-residue protein sequence, read N- to C-terminus: Protein kinase C and casein kinase substrate in neurons protein 2 (486 aa).

The 272-residue stretch at 11 to 282 folds into the F-BAR domain; sequence VEVSSDSFWE…SIKAADAVED (272 aa). Residues 25 to 274 adopt a coiled-coil conformation; sequence KRTVKRIDDG…TIYRELEQSI (250 aa). N6-acetyllysine is present on Lys-53. Residue Ser-273 is modified to Phosphoserine. At Ser-313 the chain carries Phosphoserine; by PKC. The tract at residues 315–426 is disordered; that stretch reads REKKKAVDGV…NPFDEDTTSG (112 aa). The segment covering 327-362 has biased composition (polar residues); the sequence is TGINQTGDQSGQNKPGSNLSVPSNPAQSTQLQSSYN. An NPF1 motif is present at residues 362-364; it reads NPF. Ser-373 is modified (phosphoserine; by IKKB). A compositionally biased stretch (polar residues) spans 384-396; that stretch reads NVSSYEKTQTYPT. At Ser-399 the chain carries Phosphoserine. The segment covering 404 to 416 has biased composition (polar residues); sequence NNPFSSTDANGDS. The NPF2 signature appears at 405-407; it reads NPF. The NPF3 signature appears at 417–419; that stretch reads NPF. Residues 426 to 486 enclose the SH3 domain; that stretch reads GTEVRVRALY…YPANYVEAIQ (61 aa). Ser-446 bears the Phosphoserine mark.

Belongs to the PACSIN family. Homodimer. May form heterooligomers with other PACSINs. Interacts (via NPF motifs) with EHD1 (via EH domain). Interacts (via NPF motifs) with EHD2 (via EH domain); this interaction probably stabilizes the caveolae. Interacts with EHD3. Interacts (via the SH3 domain) with MICALL1. Interacts with RAC1. Interacts (via SH3 domain) with DNM1, SYN1, SYNJ1 and WASL. Interacts (via F-BAR domain) with CAV1; this interaction induces membrane tubulation. Interacts with TRPV4. Forms a complex with EHD4 and MICALL1; the complex controls CDH5 trafficking and coordinates angiogenesis. In terms of processing, phosphorylated by casein kinase 2 (CK2). Phosphorylation by PKC probably decreases the membrane binding and tubulation capacities of PACSIN2, thereby modulating the lifetime of caveolae. Widely expressed (at protein level).

Its subcellular location is the cytoplasm. The protein resides in the cytoskeleton. It localises to the cytoplasmic vesicle membrane. The protein localises to the cell projection. It is found in the ruffle membrane. Its subcellular location is the early endosome. The protein resides in the recycling endosome membrane. It localises to the cell membrane. The protein localises to the membrane. It is found in the caveola. Its subcellular location is the cell junction. The protein resides in the adherens junction. Regulates the morphogenesis and endocytosis of caveolae. Lipid-binding protein that is able to promote the tubulation of the phosphatidic acid-containing membranes it preferentially binds. Plays a role in intracellular vesicle-mediated transport. Involved in the endocytosis of cell-surface receptors like the EGF receptor, contributing to its internalization in the absence of EGF stimulus. Essential for endothelial organization in sprouting angiogenesis, modulates CDH5-based junctions. Facilitates endothelial front-rear polarity during migration by recruiting EHD4 and MICALL1 to asymmetric adherens junctions between leader and follower cells. The protein is Protein kinase C and casein kinase substrate in neurons protein 2 (Pacsin2) of Mus musculus (Mouse).